The chain runs to 186 residues: ADP-ribosylation factor-like protein 6 (186 aa).

The N-myristoyl glycine moiety is linked to residue glycine 2. GTP is bound by residues 24–31 (GLDNSGKT), threonine 50, 69–73 (DMSGQ), glycine 72, 130–133 (NKMD), and alanine 164. Residues threonine 31 and threonine 50 each contribute to the Mg(2+) site.

The protein belongs to the small GTPase superfamily. Arf family. Interacts with SEC61B, ARL6IP1, ARL6IP2, ARL6IP3, ARL6IP4 ARL6IP5 and ARL6IP6. Interacts (GTP-bound form) with the BBSome a complex that contains BBS1, BBS2, BBS4, BBS5, BBS7, BBS8/TTC8, BBS9 and BBIP10. Interacts (GTP-free form) with IFT27.

The protein localises to the cell projection. The protein resides in the cilium membrane. It localises to the cytoplasm. Its subcellular location is the cytoskeleton. It is found in the cilium axoneme. The protein localises to the cilium basal body. Its function is as follows. Involved in membrane protein trafficking at the base of the ciliary organelle. Mediates recruitment onto plasma membrane of the BBSome complex which would constitute a coat complex required for sorting of specific membrane proteins to the primary cilia. Together with BBS1, is necessary for correct trafficking of PKD1 to primary cilia. Together with the BBSome complex and LTZL1, controls SMO ciliary trafficking and contributes to the sonic hedgehog (SHH) pathway regulation. May regulate cilia assembly and disassembly and subsequent ciliary signaling events such as the Wnt signaling cascade. Isoform 2 may be required for proper retinal function and organization. In Homo sapiens (Human), this protein is ADP-ribosylation factor-like protein 6 (ARL6).